A 226-amino-acid chain; its full sequence is ATP synthase subunit a (226 aa).

The next 5 membrane-spanning stretches (helical) occupy residues 20–40, 74–94, 100–120, 158–180, and 197–217; these read LNWL…WLLP, FISL…PYIF, LTLT…YGWI, LAVR…GNTG, and IALL…FAVL.

Belongs to the ATPase A chain family. F-type ATPases have 2 components, CF(1) - the catalytic core - and CF(0) - the membrane proton channel. CF(1) has five subunits: alpha(3), beta(3), gamma(1), delta(1), epsilon(1). CF(0) has three main subunits: a, b and c.

It is found in the mitochondrion inner membrane. In terms of biological role, mitochondrial membrane ATP synthase (F(1)F(0) ATP synthase or Complex V) produces ATP from ADP in the presence of a proton gradient across the membrane which is generated by electron transport complexes of the respiratory chain. F-type ATPases consist of two structural domains, F(1) - containing the extramembraneous catalytic core and F(0) - containing the membrane proton channel, linked together by a central stalk and a peripheral stalk. During catalysis, ATP synthesis in the catalytic domain of F(1) is coupled via a rotary mechanism of the central stalk subunits to proton translocation. Key component of the proton channel; it may play a direct role in the translocation of protons across the membrane. This is ATP synthase subunit a (ATP6) from Anopheles quadrimaculatus (Common malaria mosquito).